The sequence spans 140 residues: Cytochrome b (140 aa).

The helical transmembrane segment at 38–58 (FFALHFLLPFVLAALVIMHLI) threads the bilayer. Residues His-42 and His-56 each coordinate heme b. His-61 contributes to the a ubiquinone binding site. Residues 85 to 105 (FVFKDLVTIFIFFIVLSIFVF) traverse the membrane as a helical segment.

Belongs to the cytochrome b family. Fungal cytochrome b-c1 complex contains 10 subunits; 3 respiratory subunits, 2 core proteins and 5 low-molecular weight proteins. Cytochrome b-c1 complex is a homodimer. Heme b serves as cofactor.

Its subcellular location is the mitochondrion inner membrane. Functionally, component of the ubiquinol-cytochrome c reductase complex (complex III or cytochrome b-c1 complex) that is part of the mitochondrial respiratory chain. The b-c1 complex mediates electron transfer from ubiquinol to cytochrome c. Contributes to the generation of a proton gradient across the mitochondrial membrane that is then used for ATP synthesis. The chain is Cytochrome b (cob) from Aspergillus terreus.